The following is a 611-amino-acid chain: MFS siderochrome iron transporter C (611 aa).

Positions 1-25 (MPFLDHRTGPSYGTIDQMEQHSDDE) are disordered. N62 is a glycosylation site (N-linked (GlcNAc...) asparagine). The next 14 membrane-spanning stretches (helical) occupy residues 71 to 91 (VIAYVSIFLMSFCTSLEGQTV), 107 to 127 (LISTVLVVQNVVNAVIKPPMA), 136 to 156 (FEAFCVSILIYVLGYIQMAAS), 165 to 185 (AQIFYSAGSTGLQILQQVFIA), 194 to 214 (AFLALLPEFPFLVTVWIGPTI), 228 to 248 (YGMWSIILPASFLPLALSLLL), 282 to 302 (MGGLILLSAAVTLILVPLTLA), 313 to 333 (SIVAMIVVGLFCLIALPFWES), 353 to 373 (ALAGCTLAFWYFMAFYFSVQP), 393 to 413 (VTQTFAFTSTIAAFAVSILIK), 418 to 438 (YRAFVIAGCVVYIIGMVLMMV), 449 to 469 (ILVTQVVVGIGGGLLNVPVQL), 486 to 506 (MFLTSMEMGGAVGAALSGAVW), and 560 to 580 (LLILALIAIIPLVPLSLAMED). Positions 592–611 (VDPVPAEEGEIEPNRHVKRT) are disordered.

The protein belongs to the major facilitator superfamily.

The protein resides in the membrane. Its function is as follows. Major facilitator transporter that contributes to the maintenance of intracellular siderophore ferricrocin (FC) levels. Plays a role in conidiation and confers protection against oxidative stress. Also contributes to fungal virulence in the Galleria mellonella animal model system. Does not appear to play a role in either siderophore export or uptake. The sequence is that of MFS siderochrome iron transporter C from Aspergillus fumigatus (strain ATCC MYA-4609 / CBS 101355 / FGSC A1100 / Af293) (Neosartorya fumigata).